A 500-amino-acid polypeptide reads, in one-letter code: Cysteine--tRNA ligase (500 aa).

Cys-29 is a binding site for Zn(2+). The short motif at Val-31–His-41 is the 'HIGH' region element. Zn(2+) contacts are provided by Cys-213, His-238, and Glu-242. Residues Lys-270–Ser-274 carry the 'KMSKS' region motif. Residue Lys-273 coordinates ATP.

It belongs to the class-I aminoacyl-tRNA synthetase family. As to quaternary structure, monomer. Requires Zn(2+) as cofactor.

The protein localises to the cytoplasm. The catalysed reaction is tRNA(Cys) + L-cysteine + ATP = L-cysteinyl-tRNA(Cys) + AMP + diphosphate. The polypeptide is Cysteine--tRNA ligase (Prochlorococcus marinus (strain NATL1A)).